Here is a 288-residue protein sequence, read N- to C-terminus: Nickel/cobalt efflux system RcnA (288 aa).

The Periplasmic portion of the chain corresponds to 1 to 12 (MGEFSTLLQQGN). Residues 13-33 (AWFFIPSAILLGVLHGLEPGH) traverse the membrane as a helical segment. Residues 34 to 51 (SKTMMAAFIIAIKGTIKQ) are Cytoplasmic-facing. Residues 52-72 (AVMLGLAATLSHTAVVWLIAL) traverse the membrane as a helical segment. Residues 73 to 85 (GGMYVSRAFTAES) lie on the Periplasmic side of the membrane. A helical transmembrane segment spans residues 86 to 106 (VEPWLQLVSAIIILSTAFWMF). The Cytoplasmic portion of the chain corresponds to 107–188 (WRTWKGERDG…FHDREVTNGQ (82 aa)). Over residues 125–137 (THHHHDHEHHHHD) the composition is skewed to basic residues. The tract at residues 125-144 (THHHHDHEHHHHDHDHDHHH) is disordered. Residues 189-209 (ILLFGLTGGLIPCPAAITVLL) traverse the membrane as a helical segment. Residues 210–223 (ICIQLKAFTLGATM) lie on the Periplasmic side of the membrane. A helical membrane pass occupies residues 224-244 (VLCFSIGLALTLVAVGVGAAI). Topologically, residues 245–266 (SVQQAAKRWSGFNTLARKAPYF) are cytoplasmic. The helical transmembrane segment at 267-287 (SSILIGLVGLYMGMHGYLGII) threads the bilayer. Position 288 (Arg-288) is a topological domain, periplasmic.

It belongs to the NiCoT transporter (TC 2.A.52) family. RcnA subfamily.

Its subcellular location is the cell inner membrane. Its function is as follows. Efflux system for nickel and cobalt. This chain is Nickel/cobalt efflux system RcnA (rcnA), found in Citrobacter koseri (strain ATCC BAA-895 / CDC 4225-83 / SGSC4696).